Here is a 628-residue protein sequence, read N- to C-terminus: Growth hormone receptor (628 aa).

The signal sequence occupies residues 1–18 (MDLWQLLLTLAVVGSSNA). Residues 19-266 (FVGREAVTVT…FTCEEEFQFP (248 aa)) lie on the Extracellular side of the membrane. Residues Asn-33, Asn-40, and Asn-46 are each glycosylated (N-linked (GlcNAc...) asparagine). 2 disulfide bridges follow: Cys-56–Cys-66 and Cys-101–Cys-112. A glycan (N-linked (GlcNAc...) asparagine) is linked at Asn-115. A disulfide bond links Cys-126 and Cys-140. The region spanning 151 to 254 (PPTGLNWTLM…EILYITLPQS (104 aa)) is the Fibronectin type-III domain. Residues Asn-156, Asn-161, and Asn-200 are each glycosylated (N-linked (GlcNAc...) asparagine). The WSXWS motif motif lies at 240-244 (YGEFS). The chain crosses the membrane as a helical span at residues 267–287 (WFLIMIFGIFGLTVMLLVVMF). Over 288-628 (SKQQRIKMLI…STDQLNKIML (341 aa)) the chain is Cytoplasmic. The tract at residues 294–379 (KMLILPPVPV…HQKSLNILGA (86 aa)) is required for JAK2 binding. Positions 297-305 (ILPPVPVPK) match the Box 1 motif motif. The UbE motif signature appears at 340 to 349 (DSWVEFIELD). Ser-341 carries the phosphoserine modification. Residues Tyr-483 and Tyr-585 each carry the phosphotyrosine modification.

It belongs to the type I cytokine receptor family. Type 1 subfamily. In terms of assembly, on growth hormone (GH) binding, forms homodimers and binds JAK2 via a box 1-containing domain. Post-translationally, the soluble form (GHBP) is produced by phorbol ester-promoted proteolytic cleavage at the cell surface (shedding) by ADAM17/TACE. Shedding is inhibited by growth hormone (GH) binding to the receptor probably due to a conformational change in GHR rendering the receptor inaccessible to ADAM17. In terms of processing, on GH binding, phosphorylated on tyrosine residues in the cytoplasmic domain by JAK2. Ubiquitinated by the ECS(SOCS2) complex following ligand-binding and phosphorylation by JAK2, leading to its degradation by the proteasome. Regulation by the ECS(SOCS2) complex acts as a negative feedback loop of growth hormone receptor signaling. Ubiquitination is not sufficient for GHR internalization.

The protein resides in the cell membrane. It is found in the secreted. Receptor for pituitary gland growth hormone (GH1) involved in regulating postnatal body growth. On ligand binding, couples to the JAK2/STAT5 pathway. In terms of biological role, the soluble form (GHBP) acts as a reservoir of growth hormone in plasma and may be a modulator/inhibitor of GH signaling. This is Growth hormone receptor (GHR) from Cavia porcellus (Guinea pig).